The following is a 320-amino-acid chain: Olfactory receptor 12D1 (320 aa).

At 1–23 (MLNTTSVTEFLLLGVTDIQELQP) the chain is on the extracellular side. Asparagine 3 carries N-linked (GlcNAc...) asparagine glycosylation. A helical membrane pass occupies residues 24–44 (FLFVVFLTIYFISVAGNGAIL). The Cytoplasmic segment spans residues 45 to 55 (MIVISDPRLHS). A helical membrane pass occupies residues 56–76 (PMYFFLGNLSCLDICYSSVTL). Over 77–97 (PKMLQNFLSAHKAISFLGCIS) the chain is Extracellular. A disulfide bridge links cysteine 95 with cysteine 177. The chain crosses the membrane as a helical span at residues 98–118 (QLHFFHFLGSTEAMLLAVMAF). Residues 119–141 (DRFVAICKPLRYTVIMNPQLCTQ) are Cytoplasmic-facing. A helical membrane pass occupies residues 142–162 (MAITIWMIGFFHALLHSLMTS). Topologically, residues 163–203 (RLNFCGSNRIYHFFCDVKPLLKLACGNTELNQWLLSTVTGT) are extracellular. Residues 204-224 (IAMGPFFLTLLSYFYIITHLF) traverse the membrane as a helical segment. At 225 to 238 (FKTHSFSMLRKALS) the chain is on the cytoplasmic side. Residues 239–259 (TCASHFMVVILLYAPVLFTYI) form a helical membrane-spanning segment. Topologically, residues 260–270 (HHASGTSMDQD) are extracellular. Residues 271–291 (RITAIMYTVVTPVLNPLIYTL) form a helical membrane-spanning segment. The Cytoplasmic portion of the chain corresponds to 292-320 (RNKEVKGAFNRAMKRWLWPKEILKNSSEA).

The protein belongs to the G-protein coupled receptor 1 family.

It localises to the cell membrane. Functionally, odorant receptor. In Homo sapiens (Human), this protein is Olfactory receptor 12D1 (OR12D1).